A 308-amino-acid chain; its full sequence is Ornithine carbamoyltransferase (308 aa).

Residues 56–59 (STRT), Gln-83, Arg-107, and 134–137 (HPCQ) contribute to the carbamoyl phosphate site. L-ornithine contacts are provided by residues Asn-165, Asp-225, and 229 to 230 (SM). Carbamoyl phosphate is bound by residues 266–267 (CL) and Arg-294.

Belongs to the aspartate/ornithine carbamoyltransferase superfamily. OTCase family.

The protein resides in the cytoplasm. It carries out the reaction carbamoyl phosphate + L-ornithine = L-citrulline + phosphate + H(+). It participates in amino-acid biosynthesis; L-arginine biosynthesis; L-arginine from L-ornithine and carbamoyl phosphate: step 1/3. In terms of biological role, reversibly catalyzes the transfer of the carbamoyl group from carbamoyl phosphate (CP) to the N(epsilon) atom of ornithine (ORN) to produce L-citrulline. This Cereibacter sphaeroides (strain ATCC 17023 / DSM 158 / JCM 6121 / CCUG 31486 / LMG 2827 / NBRC 12203 / NCIMB 8253 / ATH 2.4.1.) (Rhodobacter sphaeroides) protein is Ornithine carbamoyltransferase.